A 207-amino-acid chain; its full sequence is MTQTSSPLRVGVGGPVGSGKTALLEVLCKKMRNHFEIAVVTNDIYTKEDQRILTEAGALAAERIVGVETGGCPHTAIREDASMNLAAVEALSEKFGNLDVVFVESGGDNLSATFSPELADMTIYVIDVAEGEKIPRKGGPGITKSDLLVINKIDLAPYVGARLDVMESDTNRMRPEKPWTFANLKAGQGVDTIIDFIVTHGMLTPKA.

14–21 (GPVGSGKT) serves as a coordination point for GTP.

The protein belongs to the SIMIBI class G3E GTPase family. UreG subfamily. In terms of assembly, homodimer. UreD, UreF and UreG form a complex that acts as a GTP-hydrolysis-dependent molecular chaperone, activating the urease apoprotein by helping to assemble the nickel containing metallocenter of UreC. The UreE protein probably delivers the nickel.

Its subcellular location is the cytoplasm. In terms of biological role, facilitates the functional incorporation of the urease nickel metallocenter. This process requires GTP hydrolysis, probably effectuated by UreG. This Tolumonas auensis (strain DSM 9187 / NBRC 110442 / TA 4) protein is Urease accessory protein UreG.